The following is a 159-amino-acid chain: ATP synthase subunit b', chloroplastic (159 aa).

The chain crosses the membrane as a helical span at residues 30–47; the sequence is LMALQFLALTIILNLIYY.

It belongs to the ATPase B chain family. As to quaternary structure, F-type ATPases have 2 components, F(1) - the catalytic core - and F(0) - the membrane proton channel. F(1) has five subunits: alpha(3), beta(3), gamma(1), delta(1), epsilon(1). F(0) has four main subunits: a(1), b(1), b'(1) and c(10-14). The alpha and beta chains form an alternating ring which encloses part of the gamma chain. F(1) is attached to F(0) by a central stalk formed by the gamma and epsilon chains, while a peripheral stalk is formed by the delta, b and b' chains.

Its subcellular location is the plastid. It is found in the chloroplast thylakoid membrane. Functionally, f(1)F(0) ATP synthase produces ATP from ADP in the presence of a proton or sodium gradient. F-type ATPases consist of two structural domains, F(1) containing the extramembraneous catalytic core and F(0) containing the membrane proton channel, linked together by a central stalk and a peripheral stalk. During catalysis, ATP synthesis in the catalytic domain of F(1) is coupled via a rotary mechanism of the central stalk subunits to proton translocation. Its function is as follows. Component of the F(0) channel, it forms part of the peripheral stalk, linking F(1) to F(0). The b'-subunit is a diverged and duplicated form of b found in plants and photosynthetic bacteria. The sequence is that of ATP synthase subunit b', chloroplastic from Antithamnion sp. (Red alga).